Here is a 235-residue protein sequence, read N- to C-terminus: Aspartate/glutamate leucyltransferase (235 aa).

The protein belongs to the R-transferase family. Bpt subfamily.

Its subcellular location is the cytoplasm. The catalysed reaction is N-terminal L-glutamyl-[protein] + L-leucyl-tRNA(Leu) = N-terminal L-leucyl-L-glutamyl-[protein] + tRNA(Leu) + H(+). It carries out the reaction N-terminal L-aspartyl-[protein] + L-leucyl-tRNA(Leu) = N-terminal L-leucyl-L-aspartyl-[protein] + tRNA(Leu) + H(+). Functionally, functions in the N-end rule pathway of protein degradation where it conjugates Leu from its aminoacyl-tRNA to the N-termini of proteins containing an N-terminal aspartate or glutamate. The polypeptide is Aspartate/glutamate leucyltransferase (Pseudomonas syringae pv. syringae (strain B728a)).